The sequence spans 498 residues: Protein disulfide-isomerase (498 aa).

The first 23 residues, 1-23 (MASFRGSIWYCIFVLSLIAVAIS), serve as a signal peptide directing secretion. 2 consecutive Thioredoxin domains span residues 24 to 143 (AAES…KQSG) and 339 to 484 (YLKA…KNRD). N-linked (GlcNAc...) asparagine glycosylation is present at Asn-41. Active-site nucleophile residues include Cys-61, Cys-64, Cys-406, and Cys-409. Cystine bridges form between Cys-61/Cys-64 and Cys-406/Cys-409. The Prevents secretion from ER motif lies at 495 to 498 (KDEL).

Belongs to the protein disulfide isomerase family.

The protein localises to the endoplasmic reticulum lumen. It catalyses the reaction Catalyzes the rearrangement of -S-S- bonds in proteins.. In terms of biological role, participates in the folding of proteins containing disulfide bonds, may be involved in glycosylation, prolyl hydroxylation and triglyceride transfer. The polypeptide is Protein disulfide-isomerase (Ricinus communis (Castor bean)).